Reading from the N-terminus, the 211-residue chain is Glycerol-3-phosphate acyltransferase (211 aa).

The next 5 helical transmembrane spans lie at 5–25, 55–75, 85–105, 126–146, and 168–188; these read VILG…TGYL, GPGL…ILVA, PVPA…AVLA, VLLA…LVVL, and WFFT…AFVI.

It belongs to the PlsY family. In terms of assembly, probably interacts with PlsX.

The protein resides in the cell inner membrane. The catalysed reaction is an acyl phosphate + sn-glycerol 3-phosphate = a 1-acyl-sn-glycero-3-phosphate + phosphate. Its pathway is lipid metabolism; phospholipid metabolism. Catalyzes the transfer of an acyl group from acyl-phosphate (acyl-PO(4)) to glycerol-3-phosphate (G3P) to form lysophosphatidic acid (LPA). This enzyme utilizes acyl-phosphate as fatty acyl donor, but not acyl-CoA or acyl-ACP. The chain is Glycerol-3-phosphate acyltransferase from Thermosynechococcus vestitus (strain NIES-2133 / IAM M-273 / BP-1).